Here is a 533-residue protein sequence, read N- to C-terminus: Monogalactosyldiacylglycerol synthase 1, chloroplastic (533 aa).

Positions 155 and 189 each coordinate a 1,2-diacyl-sn-glycero-3-phospho-(1'-sn-glycerol). Histidine 155 is a UDP binding site. The tract at residues 192–215 is required for binding to diacyl glycerol; it reads QLPRSYNFLVKHGTLWKMTYYGTS. Residues arginine 324, phenylalanine 413, isoleucine 414, 434-438, and glutamate 456 each bind UDP; that span reads GTIAE.

The protein belongs to the glycosyltransferase 28 family. Homodimer. As to expression, expressed in roots, stems, leaves, flowers, siliques and seeds.

Its subcellular location is the plastid. The protein resides in the chloroplast inner membrane. It carries out the reaction a 1,2-diacyl-sn-glycerol + UDP-alpha-D-galactose = a 1,2-diacyl-3-O-(beta-D-galactosyl)-sn-glycerol + UDP + H(+). It catalyses the reaction 1,2-di-(9Z,12Z-octadecadienoyl)-sn-glycerol + UDP-alpha-D-galactose = 1,2-di-(9Z,12Z-octadecadienoyl)-3-beta-D-galactosyl-sn-glycerol + UDP + H(+). The catalysed reaction is 1-(9Z-octadecenoyl)-2-hexadecanoyl-sn-glycerol + UDP-alpha-D-galactose = 1-(9Z-octadecenoyl)-2-hexadecanoyl-3-beta-D-galactosyl-sn-glycerol + UDP + H(+). The enzyme catalyses 1,2-di-(9Z-octadecenoyl)-sn-glycerol + UDP-alpha-D-galactose = 1,2-di-(9Z-octadecenoyl)-3-beta-D-galactosyl-sn-glycerol + UDP + H(+). Its activity is regulated as follows. Activated by phosphatidate (PA) and phosphatidylglycerol (PG). Inhibited by galvestine-1. Functionally, involved in the synthesis of the major structural component of photosynthetic membranes. Required for proper thylakoid membrane biogenesis. Does not discriminate between prokaryotic (18:1/16:0) or eukaryotic (18:2/18:2) 1,2-diacylglycerol species, but operates with some preference for the prokaryotic one. Is responsible for most galactolipid synthesis in chloroplasts. Required for the formation of thylakoid membranes and functional photosynthetic electron transport during cotyledons greening in young seedlings. May link galactolipid synthesis with the coordinated transcriptional regulation of chloroplasts and other organelles during cotyledon greening. The sequence is that of Monogalactosyldiacylglycerol synthase 1, chloroplastic from Arabidopsis thaliana (Mouse-ear cress).